The following is a 547-amino-acid chain: Chaperonin GroEL (547 aa).

ATP contacts are provided by residues Thr30 to Pro33, Lys51, Asp87 to Thr91, Gly415, Asn479 to Ala481, and Asp495.

The protein belongs to the chaperonin (HSP60) family. Forms a cylinder of 14 subunits composed of two heptameric rings stacked back-to-back. Interacts with the co-chaperonin GroES.

It is found in the cytoplasm. The enzyme catalyses ATP + H2O + a folded polypeptide = ADP + phosphate + an unfolded polypeptide.. Its function is as follows. Together with its co-chaperonin GroES, plays an essential role in assisting protein folding. The GroEL-GroES system forms a nano-cage that allows encapsulation of the non-native substrate proteins and provides a physical environment optimized to promote and accelerate protein folding. The polypeptide is Chaperonin GroEL (Cupriavidus necator (strain ATCC 17699 / DSM 428 / KCTC 22496 / NCIMB 10442 / H16 / Stanier 337) (Ralstonia eutropha)).